A 160-amino-acid chain; its full sequence is Large ribosomal subunit protein uL22c (160 aa).

Belongs to the universal ribosomal protein uL22 family. In terms of assembly, part of the 50S ribosomal subunit.

The protein resides in the plastid. It is found in the chloroplast. Functionally, this protein binds specifically to 23S rRNA. In terms of biological role, the globular domain of the protein is located near the polypeptide exit tunnel on the outside of the subunit, while an extended beta-hairpin is found that lines the wall of the exit tunnel in the center of the 70S ribosome. This is Large ribosomal subunit protein uL22c (rpl22) from Crucihimalaya wallichii (Rock-cress).